Reading from the N-terminus, the 72-residue chain is Translation initiation factor IF-1 (72 aa).

One can recognise an S1-like domain in the interval 1-72 (MAKEDCIEME…SKGRIIYRAR (72 aa)).

Belongs to the IF-1 family. Component of the 30S ribosomal translation pre-initiation complex which assembles on the 30S ribosome in the order IF-2 and IF-3, IF-1 and N-formylmethionyl-tRNA(fMet); mRNA recruitment can occur at any time during PIC assembly.

It localises to the cytoplasm. One of the essential components for the initiation of protein synthesis. Stabilizes the binding of IF-2 and IF-3 on the 30S subunit to which N-formylmethionyl-tRNA(fMet) subsequently binds. Helps modulate mRNA selection, yielding the 30S pre-initiation complex (PIC). Upon addition of the 50S ribosomal subunit IF-1, IF-2 and IF-3 are released leaving the mature 70S translation initiation complex. The chain is Translation initiation factor IF-1 from Pseudoalteromonas atlantica (strain T6c / ATCC BAA-1087).